Reading from the N-terminus, the 1199-residue chain is Putative mitoferrin (1199 aa).

The helical transmembrane segment at 32-52 (VPLWQHIFCGSIAGLMEHVFM) threads the bilayer. Residues Asn92, Asn171, Asn208, Asn268, Asn326, Asn353, Asn443, Asn499, Asn539, Asn649, Asn708, Asn715, and Asn723 are each glycosylated (N-linked (GlcNAc...) asparagine). A helical transmembrane segment spans residues 730 to 750 (GVNVVVLGCIPAHALYFSTFE). N-linked (GlcNAc...) asparagine glycosylation is found at Asn763 and Asn772. The Solcar 1 repeat unit spans residues 792-873 (LNYFSIAVSG…ICTNEKMKKI (82 aa)). 2 helical membrane-spanning segments follow: residues 795 to 815 (FSIAVSGFLATLVHDLIITPI) and 845 to 865 (LYLSLPITLLMNIPYQIIMIC). Asn914, Asn922, Asn965, Asn1013, Asn1022, Asn1041, and Asn1056 each carry an N-linked (GlcNAc...) asparagine glycan. The Solcar 2 repeat unit spans residues 1109–1191 (SYFVCAGIGG…WGTYETMKRF (83 aa)). Residues 1111–1131 (FVCAGIGGGIAAVLTNPLDVI) traverse the membrane as a helical segment.

The protein belongs to the mitochondrial carrier (TC 2.A.29) family.

It is found in the mitochondrion membrane. Putative iron transporter. This is Putative mitoferrin from Plasmodium falciparum (isolate 3D7).